A 310-amino-acid polypeptide reads, in one-letter code: Olfactory receptor 4C16 (310 aa).

Residues 1 to 23 (MQLNNNVTEFILLGLTQDPFWKK) lie on the Extracellular side of the membrane. N-linked (GlcNAc...) asparagine glycosylation is present at Asn-6. Residues 24–47 (IVFVIFLRLYLGTLLGNLLIIISV) form a helical membrane-spanning segment. The Cytoplasmic portion of the chain corresponds to 48–55 (KTSQALKN). The chain crosses the membrane as a helical span at residues 56–77 (PMFFFLFYLSLSDTCLSTSITP). At 78-98 (RMIVDALLKKTTISFSECMIQ) the chain is on the extracellular side. Cys-95 and Cys-187 are disulfide-bonded. A helical membrane pass occupies residues 99 to 118 (VFSSHVFGCLEIFILILTAV). The Cytoplasmic portion of the chain corresponds to 119–137 (DRYVDICKPLHYMTIISQW). A helical transmembrane segment spans residues 138 to 156 (VCGVLMAVAWVGSCVHSLV). The Extracellular portion of the chain corresponds to 157–193 (QIFLALSLPFCGPNVINHCFCDLQPLLKQACSETYVV). A helical membrane pass occupies residues 194-217 (NLLLVSNSGAICAVSYVMLIFSYV). At 218–233 (IFLHSLRNHSAEVIKK) the chain is on the cytoplasmic side. The helical transmembrane segment at 234–256 (ALSTCVSHIIVVILFFGPCIFMY) threads the bilayer. The Extracellular portion of the chain corresponds to 257-267 (TCLATVFPMDK). A helical membrane pass occupies residues 268 to 287 (MIAVFYTVGTSFLNPVIYTL). Residues 288 to 310 (KNTEVKSAMRKLWSKKLITDDKR) lie on the Cytoplasmic side of the membrane.

This sequence belongs to the G-protein coupled receptor 1 family.

The protein localises to the cell membrane. Odorant receptor. The sequence is that of Olfactory receptor 4C16 (OR4C16) from Homo sapiens (Human).